We begin with the raw amino-acid sequence, 462 residues long: 3-oxoacyl-[acyl-carrier-protein] synthase I, chloroplastic (462 aa).

A chloroplast-targeting transit peptide spans 1–35 (MHAHAAHALGLRVPPPAFPRRRARPRRRPAAAVLA). A disordered region spans residues 1-45 (MHAHAAHALGLRVPPPAFPRRRARPRRRPAAAVLATSAAPQRETD). Residues 19 to 29 (PRRRARPRRRP) are compositionally biased toward basic residues. Over residues 30-39 (AAAVLATSAA) the composition is skewed to low complexity. The region spanning 47-459 (RKRVVITGMG…GHNSVVVFAP (413 aa)) is the Ketosynthase family 3 (KS3) domain. Catalysis depends on for beta-ketoacyl synthase activity residues Cys-213, His-353, and His-389.

It belongs to the thiolase-like superfamily. Beta-ketoacyl-ACP synthases family. As to quaternary structure, homodimer.

It localises to the plastid. It is found in the chloroplast. It catalyses the reaction a fatty acyl-[ACP] + malonyl-[ACP] + H(+) = a 3-oxoacyl-[ACP] + holo-[ACP] + CO2. Catalyzes the condensation reaction of fatty acid synthesis by the addition to an acyl acceptor of two carbons from malonyl-ACP. Specific for elongation from C-10 to unsaturated C-16 and C-18 fatty acids. The chain is 3-oxoacyl-[acyl-carrier-protein] synthase I, chloroplastic (KAS12) from Hordeum vulgare (Barley).